The chain runs to 284 residues: MKVFILALLALTATTAIAQLDTTCSQGFRQYQQQQQPGQRQLLEQMRPCVAFLQQQCRPLRMPFLQTQVEQLSSCQIDQYQCCQQLAQIPEQIRCHAIHNVVEAIMQQQSQQHRQERQQQAQHKSMRMLLETLYLMCNIYVPIQCQQQQQLGQQQQQQLQEQLTPCATFLQHQCSPVTVPFPQIRVDQPTSCQNVQHQCCRQLSQIPEQYRCQAIHNVAEAIRHQQPQQQCQGMYQPQQPAKLESIRMSLQALRSMCRIYIPVQCPAPTAYNIPMVATYTGGAC.

An N-terminal signal peptide occupies residues 1–18; the sequence is MKVFILALLALTATTAIA.

Belongs to the prolamin family. Contains disulfide bonds.

Its function is as follows. Seed storage protein. Might be integrated via inter-chain disulfide bonds within the glutenin polymer. This is Avenin-like b11 from Triticum aestivum (Wheat).